Consider the following 50-residue polypeptide: Photosystem II reaction center protein M (50 aa).

Residues Phe6–Phe26 traverse the membrane as a helical segment.

The protein belongs to the PsbM family. PSII is composed of 1 copy each of membrane proteins PsbA, PsbB, PsbC, PsbD, PsbE, PsbF, PsbH, PsbI, PsbJ, PsbK, PsbL, PsbM, PsbT, PsbX, PsbY, Psb30/Ycf12, peripheral proteins PsbO, CyanoQ (PsbQ), PsbU, PsbV and a large number of cofactors. It forms dimeric complexes.

The protein localises to the cellular thylakoid membrane. In terms of biological role, one of the components of the core complex of photosystem II (PSII). PSII is a light-driven water:plastoquinone oxidoreductase that uses light energy to abstract electrons from H(2)O, generating O(2) and a proton gradient subsequently used for ATP formation. It consists of a core antenna complex that captures photons, and an electron transfer chain that converts photonic excitation into a charge separation. This subunit is found at the monomer-monomer interface. This chain is Photosystem II reaction center protein M, found in Prochlorococcus marinus (strain MIT 9215).